We begin with the raw amino-acid sequence, 392 residues long: 2-oxoisovalerate dehydrogenase subunit beta, mitochondrial (392 aa).

Residues 1–50 constitute a mitochondrion transit peptide; that stretch reads MAVVAAAAGWLLRLRAAGAEGHWRRLPGAGLARGFLHPAATVEDAAQRRQ. Tyr-152 provides a ligand contact to thiamine diphosphate. K(+) is bound by residues Gly-178, Leu-180, Thr-181, Cys-228, and Asp-231. Lys-232 carries the post-translational modification N6-acetyllysine. Residue Asn-233 coordinates K(+). An N6-acetyllysine modification is found at Lys-241.

In terms of assembly, heterotetramer of 2 alpha/BCKDHA and 2 beta chains/BCKDHB that forms the branched-chain alpha-keto acid decarboxylase (E1) component of the BCKD complex. The branched-chain alpha-ketoacid dehydrogenase is a large complex composed of three major building blocks E1, E2 and E3. It is organized around E2, a 24-meric cubic core composed of DBT, to which are associated 6 to 12 copies of E1, and approximately 6 copies of the dehydrogenase E3, a DLD dimer. Requires thiamine diphosphate as cofactor.

It is found in the mitochondrion matrix. It carries out the reaction N(6)-[(R)-lipoyl]-L-lysyl-[protein] + 3-methyl-2-oxobutanoate + H(+) = N(6)-[(R)-S(8)-2-methylpropanoyldihydrolipoyl]-L-lysyl-[protein] + CO2. Functionally, together with BCKDHA forms the heterotetrameric E1 subunit of the mitochondrial branched-chain alpha-ketoacid dehydrogenase (BCKD) complex. The BCKD complex catalyzes the multi-step oxidative decarboxylation of alpha-ketoacids derived from the branched-chain amino-acids valine, leucine and isoleucine producing CO2 and acyl-CoA which is subsequently utilized to produce energy. The E1 subunit catalyzes the first step with the decarboxylation of the alpha-ketoacid forming an enzyme-product intermediate. A reductive acylation mediated by the lipoylamide cofactor of E2 extracts the acyl group from the E1 active site for the next step of the reaction. The chain is 2-oxoisovalerate dehydrogenase subunit beta, mitochondrial from Homo sapiens (Human).